The chain runs to 289 residues: Splicing factor C9orf78 homolog (289 aa).

Disordered stretches follow at residues 1–30 (MRIT…VRLK) and 85–111 (RGKD…RRDE). The segment at 5-58 (GKTFRRRRADSESEEDEQESEEVRLKLEETREVQNLRKRPNGVSAAALLVGEKV) is interaction with SNRNP200. Phosphoserine is present on residues S15 and S17. Y147 carries the post-translational modification Phosphotyrosine. Residues 232 to 283 (LNAPIRRNKEEPKARPLRVGDTEKPEPERSPPNRKRPANEKATDDYHYEKFK) are compositionally biased toward basic and acidic residues. Residues 232-289 (LNAPIRRNKEEPKARPLRVGDTEKPEPERSPPNRKRPANEKATDDYHYEKFKKMNRRY) are disordered. Phosphothreonine is present on T253. S261 is modified (phosphoserine).

The protein belongs to the TLS1 family. As to quaternary structure, component of the spliceosome. Interacts with SNRNP200; the interaction is direct. Interacts with PRPF8.

Its subcellular location is the nucleus. It is found in the chromosome. It localises to the centromere. Its function is as follows. Plays a role in pre-mRNA splicing by promoting usage of the upstream 3'-splice site at alternative NAGNAG splice sites; these are sites featuring alternative acceptor motifs separated by only a few nucleotides. May also modulate exon inclusion events. PPlays a role in spliceosomal remodeling by displacing WBP4 from SNRNP200 and may act to inhibit SNRNP200 helicase activity. Binds U5 snRNA. Required for proper chromosome segregation. Not required for splicing of shelterin components. The sequence is that of Splicing factor C9orf78 homolog from Mus musculus (Mouse).